The sequence spans 410 residues: Cytosolic isocitrate dehydrogenase [NADP] (410 aa).

Residues 77–79 (TIT) and Arg84 contribute to the NADP(+) site. Residue Thr79 participates in substrate binding. Substrate is bound by residues 96 to 102 (SPNGTIR), Arg111, and Arg134. Lys260 contacts NADP(+). Mn(2+) contacts are provided by Asp275 and Asp279. Residues 310 to 315 (GTVTRH) and Asn328 each bind NADP(+).

It belongs to the isocitrate and isopropylmalate dehydrogenases family. The cofactor is Mg(2+). Mn(2+) serves as cofactor.

The protein localises to the cytoplasm. It localises to the cytosol. The catalysed reaction is D-threo-isocitrate + NADP(+) = 2-oxoglutarate + CO2 + NADPH. In terms of biological role, may supply 2-oxoglutarate for amino acid biosynthesis and ammonia assimilation via the glutamine synthetase/glutamate synthase (GS/GOGAT) pathway. May be involved in the production of NADPH to promote redox signaling or homeostasis in response to oxidative stress, or redox signaling linked to defense responses. The protein is Cytosolic isocitrate dehydrogenase [NADP] of Arabidopsis thaliana (Mouse-ear cress).